Reading from the N-terminus, the 94-residue chain is Integration host factor subunit beta (94 aa).

It belongs to the bacterial histone-like protein family. As to quaternary structure, heterodimer of an alpha and a beta chain.

This protein is one of the two subunits of integration host factor, a specific DNA-binding protein that functions in genetic recombination as well as in transcriptional and translational control. This Roseobacter denitrificans (strain ATCC 33942 / OCh 114) (Erythrobacter sp. (strain OCh 114)) protein is Integration host factor subunit beta.